The primary structure comprises 123 residues: Large ribosomal subunit protein uL14 (123 aa).

Belongs to the universal ribosomal protein uL14 family. As to quaternary structure, part of the 50S ribosomal subunit. Forms a cluster with proteins L3 and L19. In the 70S ribosome, L14 and L19 interact and together make contacts with the 16S rRNA in bridges B5 and B8.

In terms of biological role, binds to 23S rRNA. Forms part of two intersubunit bridges in the 70S ribosome. The sequence is that of Large ribosomal subunit protein uL14 from Histophilus somni (strain 129Pt) (Haemophilus somnus).